A 233-amino-acid polypeptide reads, in one-letter code: tRNA (guanine-N(7)-)-methyltransferase (233 aa).

Residues 1–23 (MSPQDRPSRTTEAFFGRRRGKPV) form a disordered region. S-adenosyl-L-methionine-binding residues include Glu-64, Glu-89, Asp-116, and Asp-138. Residue Asp-138 is part of the active site. Substrate-binding positions include Lys-142, Asp-174, and 212–215 (TRYE).

It belongs to the class I-like SAM-binding methyltransferase superfamily. TrmB family.

It carries out the reaction guanosine(46) in tRNA + S-adenosyl-L-methionine = N(7)-methylguanosine(46) in tRNA + S-adenosyl-L-homocysteine. The protein operates within tRNA modification; N(7)-methylguanine-tRNA biosynthesis. Catalyzes the formation of N(7)-methylguanine at position 46 (m7G46) in tRNA. The sequence is that of tRNA (guanine-N(7)-)-methyltransferase from Mesorhizobium japonicum (strain LMG 29417 / CECT 9101 / MAFF 303099) (Mesorhizobium loti (strain MAFF 303099)).